Here is a 1093-residue protein sequence, read N- to C-terminus: Small G protein signaling modulator 1 (1093 aa).

The RUN domain occupies 36 to 190 (HEDSSHIISF…EYTKMKTADH (155 aa)). An important for interaction with RAB9A and RAB9B region spans residues 256 to 297 (LLYGKNNVLVQPRDDMEAVPGYLSLHQTADVMTLKWTPNQLM). A required for interaction with RAP family members region spans residues 301 to 350 (VGDLDYEKSVYWDYAVTIRLEEIVYLHCHQQVDSGGTVVLVSQDGIQRPP). Disordered regions lie at residues 377-412 (DPPLWSQRGKGKVFPKLRKRSPQGSSESTSSDKEDD), 645-778 (DSTI…ELAV), and 810-838 (DGAVMDGWPGEADKPSRADSEDNLSEEPE). Positions 385 to 397 (GKGKVFPKLRKRS) are enriched in basic residues. In terms of domain architecture, Rab-GAP TBC spans 562–1026 (GVQPEIRRAV…SVWETIWAAK (465 aa)). Residues 647–676 (TISNESSQSCSSGRQNLRLQSDSSSSTQVF) are compositionally biased toward polar residues. The span at 687-696 (AEGRSEEKHP) shows a compositional bias: basic and acidic residues. Over residues 702 to 736 (NPANGTCSPDSGHPSSHNFSSGLSEHSEPSLSTED) the composition is skewed to polar residues. 2 stretches are compositionally biased toward basic and acidic residues: residues 766 to 776 (TSRDEAPREEL) and 820 to 829 (EADKPSRADS).

Belongs to the RUTBC family. Interacts with RAB9A (GTP-bound form) and RAB9B. Interacts with RAB3A, RAB4A, RAB5A, RAB8A, RAB11A, RAP1A, RAP1B, RAP2A and RAP2B. No interaction with RAB27A. Expressed only in brain.

The protein resides in the golgi apparatus. It is found in the trans-Golgi network. It localises to the cytoplasm. Its subcellular location is the cytoplasmic vesicle membrane. Interacts with numerous Rab family members, functioning as Rab effector for some, and as GTPase activator for others. Promotes GTP hydrolysis by RAB34 and RAB36. Probably functions as a GTPase effector with RAB9A and RAB9B; does not stimulate GTP hydrolysis with RAB9A and RAB9B. The polypeptide is Small G protein signaling modulator 1 (Sgsm1) (Mus musculus (Mouse)).